Reading from the N-terminus, the 364-residue chain is tRNA 2-selenouridine synthase (364 aa).

A Rhodanese domain is found at 14 to 137; it reads LLADTPLIDV…LRQTAIQATW (124 aa). Cys97 functions as the S-selanylcysteine intermediate in the catalytic mechanism.

Belongs to the SelU family. As to quaternary structure, monomer.

The enzyme catalyses 5-methylaminomethyl-2-thiouridine(34) in tRNA + selenophosphate + (2E)-geranyl diphosphate + H2O + H(+) = 5-methylaminomethyl-2-selenouridine(34) in tRNA + (2E)-thiogeraniol + phosphate + diphosphate. It catalyses the reaction 5-methylaminomethyl-2-thiouridine(34) in tRNA + (2E)-geranyl diphosphate = 5-methylaminomethyl-S-(2E)-geranyl-thiouridine(34) in tRNA + diphosphate. It carries out the reaction 5-methylaminomethyl-S-(2E)-geranyl-thiouridine(34) in tRNA + selenophosphate + H(+) = 5-methylaminomethyl-2-(Se-phospho)selenouridine(34) in tRNA + (2E)-thiogeraniol. The catalysed reaction is 5-methylaminomethyl-2-(Se-phospho)selenouridine(34) in tRNA + H2O = 5-methylaminomethyl-2-selenouridine(34) in tRNA + phosphate. Involved in the post-transcriptional modification of the uridine at the wobble position (U34) of tRNA(Lys), tRNA(Glu) and tRNA(Gln). Catalyzes the conversion of 2-thiouridine (S2U-RNA) to 2-selenouridine (Se2U-RNA). Acts in a two-step process involving geranylation of 2-thiouridine (S2U) to S-geranyl-2-thiouridine (geS2U) and subsequent selenation of the latter derivative to 2-selenouridine (Se2U) in the tRNA chain. In Salmonella paratyphi A (strain ATCC 9150 / SARB42), this protein is tRNA 2-selenouridine synthase.